The sequence spans 78 residues: MYGKIIFVLLLSGIVSISASSTTGVAMHTSTSSSVTKSYISSQTNGITLINWWAMARVIFEVMLVVVGMIILISYCIR.

The N-terminal stretch at 1-19 is a signal peptide; sequence MYGKIIFVLLLSGIVSISA. At 20-52 the chain is on the extracellular side; it reads SSTTGVAMHTSTSSSVTKSYISSQTNGITLINW. The chain crosses the membrane as a helical span at residues 53–73; that stretch reads WAMARVIFEVMLVVVGMIILI. At 74-78 the chain is on the cytoplasmic side; that stretch reads SYCIR.

This sequence belongs to the glycophorin-A family. The N-terminal extracellular domain is heavily glycosylated on serine and threonine residues. As to expression, erythrocytes.

The protein resides in the membrane. Functionally, this protein is a minor sialoglycoprotein in human erythrocyte membranes. The protein is Glycophorin-E (GYPE) of Homo sapiens (Human).